The chain runs to 358 residues: GDSL esterase/lipase At2g30220 (358 aa).

Residues 1–22 (MYISKTIVFGLFVATLLVSCNA) form the signal peptide. A glycan (N-linked (GlcNAc...) asparagine) is linked at Asn25. Ser40 serves as the catalytic Nucleophile. N-linked (GlcNAc...) asparagine glycans are attached at residues Asn102 and Asn324. Catalysis depends on residues Asp332 and His335.

The protein belongs to the 'GDSL' lipolytic enzyme family.

Its subcellular location is the secreted. The sequence is that of GDSL esterase/lipase At2g30220 from Arabidopsis thaliana (Mouse-ear cress).